A 54-amino-acid polypeptide reads, in one-letter code: Large ribosomal subunit protein bL33B (54 aa).

Belongs to the bacterial ribosomal protein bL33 family.

The sequence is that of Large ribosomal subunit protein bL33B from Mycobacterium sp. (strain JLS).